Consider the following 350-residue polypeptide: Zona pellucida-binding protein 1 (350 aa).

Residues 1–38 (MEASAPDRARRGWRRARAAASPLSRAAVVLLLSALVLR) form the signal peptide. N113, N186, and N339 each carry an N-linked (GlcNAc...) asparagine glycan.

The protein belongs to the zona pellucida-binding protein Sp38 family. Post-translationally, N-glycosylated. As to expression, expressed in testis. Detected in sperm cells.

It localises to the cytoplasmic vesicle. The protein localises to the secretory vesicle. The protein resides in the acrosome. It is found in the secreted. Its subcellular location is the acrosome membrane. Its function is as follows. Plays a role in acrosome compaction and sperm morphogenesis. Is implicated in sperm-oocyte interaction during fertilization. The polypeptide is Zona pellucida-binding protein 1 (ZPBP) (Sus scrofa (Pig)).